The primary structure comprises 583 residues: Torsin-1A-interacting protein 1 (583 aa).

At 1-339 (MAGERWRAEG…DESSVKIKWW (339 aa)) the chain is on the nuclear side. Positions 23-208 (APIREGRRRL…PPLRSPRPDA (186 aa)) are disordered. The residue at position 60 (S60) is a Phosphoserine. Basic and acidic residues-rich tracts occupy residues 70–101 (FEPR…EVRE) and 115–132 (GPQE…RLEQ). S134, S142, S155, and S157 each carry phosphoserine. Residues 166 to 188 (SSQPVTSQTVSKKTVRTPETSVM) show a composition bias toward polar residues. S189 is subject to Phosphoserine. T222 bears the Phosphothreonine mark. S228, S231, and S242 each carry phosphoserine. K309 participates in a covalent cross-link: Glycyl lysine isopeptide (Lys-Gly) (interchain with G-Cter in SUMO2). At S316 the chain carries Phosphoserine. Residues 340-360 (LLILVAALAMGIYWFFHTPVV) traverse the membrane as a helical segment. The segment at 356–583 (HTPVVETTAV…ENALKAGSCL (228 aa)) is interaction with TOR1A. Positions 360 to 388 (VETTAVQEFQNQMKQLQSKYQSQDEKLWK) form a coiled coil. Over 361–583 (ETTAVQEFQN…ENALKAGSCL (223 aa)) the chain is Perinuclear space. N399 carries N-linked (GlcNAc...) asparagine glycosylation.

This sequence belongs to the TOR1AIP family. As to quaternary structure, interacts with ATP1B4. Interacts with TOR1A (ATP-bound). Interacts with TOR1B, TOR2A and TOR3A. Interacts with VIM.

The protein resides in the nucleus inner membrane. Its function is as follows. Required for nuclear membrane integrity. Induces TOR1A and TOR1B ATPase activity and is required for their location on the nuclear membrane. Binds to A- and B-type lamins. Possible role in membrane attachment and assembly of the nuclear lamina. The polypeptide is Torsin-1A-interacting protein 1 (Tor1aip1) (Rattus norvegicus (Rat)).